The sequence spans 55 residues: MPQLNPSPWFIILLFSWVIFMVILPNKVMNHLFNNEPALKSTEKSKPDPWNWPWL.

Residues 4–24 (LNPSPWFIILLFSWVIFMVIL) traverse the membrane as a helical segment.

This sequence belongs to the ATPase protein 8 family. Component of the ATP synthase complex composed at least of ATP5F1A/subunit alpha, ATP5F1B/subunit beta, ATP5MC1/subunit c (homooctomer), MT-ATP6/subunit a, MT-ATP8/subunit 8, ATP5ME/subunit e, ATP5MF/subunit f, ATP5MG/subunit g, ATP5MK/subunit k, ATP5MJ/subunit j, ATP5F1C/subunit gamma, ATP5F1D/subunit delta, ATP5F1E/subunit epsilon, ATP5PF/subunit F6, ATP5PB/subunit b, ATP5PD/subunit d, ATP5PO/subunit OSCP. ATP synthase complex consists of a soluble F(1) head domain (subunits alpha(3) and beta(3)) - the catalytic core - and a membrane F(0) domain - the membrane proton channel (subunits c, a, 8, e, f, g, k and j). These two domains are linked by a central stalk (subunits gamma, delta, and epsilon) rotating inside the F1 region and a stationary peripheral stalk (subunits F6, b, d, and OSCP).

The protein localises to the mitochondrion membrane. In terms of biological role, subunit 8, of the mitochondrial membrane ATP synthase complex (F(1)F(0) ATP synthase or Complex V) that produces ATP from ADP in the presence of a proton gradient across the membrane which is generated by electron transport complexes of the respiratory chain. ATP synthase complex consist of a soluble F(1) head domain - the catalytic core - and a membrane F(1) domain - the membrane proton channel. These two domains are linked by a central stalk rotating inside the F(1) region and a stationary peripheral stalk. During catalysis, ATP synthesis in the catalytic domain of F(1) is coupled via a rotary mechanism of the central stalk subunits to proton translocation. In vivo, can only synthesize ATP although its ATP hydrolase activity can be activated artificially in vitro. Part of the complex F(0) domain. This chain is ATP synthase F(0) complex subunit 8, found in Scyliorhinus canicula (Small-spotted catshark).